We begin with the raw amino-acid sequence, 303 residues long: Probable 5-dehydro-4-deoxyglucarate dehydratase (303 aa).

It belongs to the DapA family.

The enzyme catalyses 5-dehydro-4-deoxy-D-glucarate + H(+) = 2,5-dioxopentanoate + CO2 + H2O. The protein operates within carbohydrate acid metabolism; D-glucarate degradation; 2,5-dioxopentanoate from D-glucarate: step 2/2. This Acinetobacter baumannii (strain AB307-0294) protein is Probable 5-dehydro-4-deoxyglucarate dehydratase.